Reading from the N-terminus, the 177-residue chain is Large ribosomal subunit protein uL6 (177 aa).

This sequence belongs to the universal ribosomal protein uL6 family. In terms of assembly, part of the 50S ribosomal subunit.

This protein binds to the 23S rRNA, and is important in its secondary structure. It is located near the subunit interface in the base of the L7/L12 stalk, and near the tRNA binding site of the peptidyltransferase center. This is Large ribosomal subunit protein uL6 from Brucella canis (strain ATCC 23365 / NCTC 10854 / RM-666).